Reading from the N-terminus, the 210-residue chain is Probable nicotinate-nucleotide adenylyltransferase (210 aa).

The protein belongs to the NadD family.

It carries out the reaction nicotinate beta-D-ribonucleotide + ATP + H(+) = deamido-NAD(+) + diphosphate. It functions in the pathway cofactor biosynthesis; NAD(+) biosynthesis; deamido-NAD(+) from nicotinate D-ribonucleotide: step 1/1. Functionally, catalyzes the reversible adenylation of nicotinate mononucleotide (NaMN) to nicotinic acid adenine dinucleotide (NaAD). The protein is Probable nicotinate-nucleotide adenylyltransferase of Methylococcus capsulatus (strain ATCC 33009 / NCIMB 11132 / Bath).